The following is a 249-amino-acid chain: Protein YIPF4 (249 aa).

Pro residues predominate over residues 1–15 (MQPPGPQQPPPPPLF). The tract at residues 1–40 (MQPPGPQQPPPPPLFTPNNGDFTFVSSADAEDPSGSITTP) is disordered. Topologically, residues 1 to 116 (MQPPGPQQPP…LGFNRQVVRD (116 aa)) are cytoplasmic. Polar residues predominate over residues 16 to 26 (TPNNGDFTFVS). The helical transmembrane segment at 117–137 (NPDFWGPLAVVLFFSMISLYG) threads the bilayer. Q138 is a topological domain (lumenal). Residues 139 to 159 (FKVVSWIITIWIFGSLTIFLL) form a helical membrane-spanning segment. Residues 160-171 (ARVLGGEVAYGQ) lie on the Cytoplasmic side of the membrane. The helical transmembrane segment at 172-192 (VLGVIGYSLLPLIVIAPVLLV) threads the bilayer. The Lumenal portion of the chain corresponds to 193-200 (VGSFEVVS). Residues 201–221 (TLIKLFGVFWAAYSAASLLVG) form a helical membrane-spanning segment. The Cytoplasmic segment spans residues 222 to 228 (EEFKTKK). The chain crosses the membrane as a helical span at residues 229–249 (PLLIYPIFLLYIYFLSLYTGV).

This sequence belongs to the YIP1 family.

It is found in the golgi apparatus. Its subcellular location is the cis-Golgi network membrane. Its function is as follows. Involved in the maintenance of the Golgi structure. This chain is Protein YIPF4 (YIPF4), found in Gallus gallus (Chicken).